We begin with the raw amino-acid sequence, 279 residues long: 2-dehydropantoate 2-reductase (279 aa).

Residues 6–11 (GLGAVG), lysine 66, and asparagine 86 each bind NADP(+). The active-site Proton donor is lysine 158. Substrate-binding positions include lysine 158, asparagine 162, asparagine 166, asparagine 176, and 225–228 (NLSS). Residue glutamate 240 coordinates NADP(+).

Belongs to the ketopantoate reductase family.

The protein resides in the cytoplasm. The catalysed reaction is (R)-pantoate + NAD(+) = 2-dehydropantoate + NADH + H(+). It catalyses the reaction (R)-pantoate + NADP(+) = 2-dehydropantoate + NADPH + H(+). The protein operates within cofactor biosynthesis; coenzyme A biosynthesis. In terms of biological role, catalyzes the NAD(P)H-dependent reduction of ketopantoate into pantoic acid. The polypeptide is 2-dehydropantoate 2-reductase (Pyrobaculum aerophilum (strain ATCC 51768 / DSM 7523 / JCM 9630 / CIP 104966 / NBRC 100827 / IM2)).